The sequence spans 78 residues: MKLSFLSLALAIIFVTVLIYAPQAEAKALADAVADADADADAAADAVADALADADAFKIPWGKIKDFVTGGIKEVAKG.

A signal peptide spans 1-26 (MKLSFLSLALAIIFVTVLIYAPQAEA). A propeptide spanning residues 27 to 56 (KALADAVADADADADAAADAVADALADADA) is cleaved from the precursor. At Lys-77 the chain carries Lysine amide.

Belongs to the formicidae venom precursor-01 superfamily. In terms of tissue distribution, expressed by the venom gland.

It is found in the secreted. In terms of biological role, peptide with toxicity towards insects that may also act as antimicrobial peptide. Causes calcium influx in F11 cells (EC(50)=5.8 nM), possibly by modulating sodium channels (Nav). In vivo, is lethal to insects, but does not show toxicity to vertebrates. Intraplantar injection into mice does not induce spontaneous nocifensive behaviors up to a dose of 200 pmol. This is Myrmicitoxin-Ta2a from Tetramorium africanum (Fierce ant).